A 125-amino-acid chain; its full sequence is Glycine cleavage system H protein (125 aa).

The 83-residue stretch at 22–104 (SYVIGITDFA…YDTGWILKLE (83 aa)) folds into the Lipoyl-binding domain. Lysine 63 carries the post-translational modification N6-lipoyllysine.

It belongs to the GcvH family. In terms of assembly, the glycine cleavage system is composed of four proteins: P, T, L and H. (R)-lipoate serves as cofactor.

In terms of biological role, the glycine cleavage system catalyzes the degradation of glycine. The H protein shuttles the methylamine group of glycine from the P protein to the T protein. Is also involved in protein lipoylation via its role as an octanoyl/lipoyl carrier protein intermediate. This chain is Glycine cleavage system H protein, found in Listeria monocytogenes serotype 4b (strain CLIP80459).